A 147-amino-acid polypeptide reads, in one-letter code: Hemoglobin subunit beta (147 aa).

Residues 3–147 enclose the Globin domain; that stretch reads EWTDDERAII…VVSALGRQYH (145 aa). Residues H64 and H93 each contribute to the heme b site.

The protein belongs to the globin family. In terms of assembly, heterotetramer of two alpha chains and two beta chains. In terms of tissue distribution, red blood cells.

Its function is as follows. Involved in oxygen transport from gills to the various peripheral tissues. The polypeptide is Hemoglobin subunit beta (hbb) (Melanogrammus aeglefinus (Haddock)).